A 622-amino-acid polypeptide reads, in one-letter code: Type 2 DNA topoisomerase 6 subunit B (622 aa).

Residues N48, D80, 101-102 (SR), 111-118 (GQQGIGIS), and K435 each bind ATP.

The protein belongs to the TOP6B family. Homodimer. Heterotetramer of two Top6A and two Top6B chains.

It catalyses the reaction ATP-dependent breakage, passage and rejoining of double-stranded DNA.. Relaxes both positive and negative superturns and exhibits a strong decatenase activity. The protein is Type 2 DNA topoisomerase 6 subunit B of Methanococcoides burtonii (strain DSM 6242 / NBRC 107633 / OCM 468 / ACE-M).